Consider the following 118-residue polypeptide: C-X-C motif chemokine 17 (118 aa).

Positions 1–22 are cleaved as a signal peptide; it reads MKVLISSLLLLLPLMLMSVVSS. Cystine bridges form between Cys74/Cys102 and Cys76/Cys109.

It belongs to the intercrine alpha (chemokine CxC) family.

It localises to the secreted. Its function is as follows. Chemokine that acts as a chemoattractant for monocytes, macrophages and dendritic cells. Plays a role in angiogenesis and possibly in the development of tumors. Acts as an anti-inflammatory in the stomach. May play a role in the innate defense against infections. Activates the C-X-C chemokine receptor GPR35 to induce a rapid and transient rise in the level of intracellular calcium ions. The protein is C-X-C motif chemokine 17 (CXCL17) of Bos taurus (Bovine).